We begin with the raw amino-acid sequence, 66 residues long: Large ribosomal subunit protein bL35c (66 aa).

It belongs to the bacterial ribosomal protein bL35 family.

The protein resides in the plastid. It is found in the chloroplast. This chain is Large ribosomal subunit protein bL35c, found in Guillardia theta (Cryptophyte).